We begin with the raw amino-acid sequence, 325 residues long: N-acetyl-gamma-glutamyl-phosphate reductase (325 aa).

Cys-131 is a catalytic residue.

The protein belongs to the NAGSA dehydrogenase family. Type 1 subfamily.

It localises to the cytoplasm. The enzyme catalyses N-acetyl-L-glutamate 5-semialdehyde + phosphate + NADP(+) = N-acetyl-L-glutamyl 5-phosphate + NADPH + H(+). It participates in amino-acid biosynthesis; L-arginine biosynthesis; N(2)-acetyl-L-ornithine from L-glutamate: step 3/4. Functionally, catalyzes the NADPH-dependent reduction of N-acetyl-5-glutamyl phosphate to yield N-acetyl-L-glutamate 5-semialdehyde. This chain is N-acetyl-gamma-glutamyl-phosphate reductase, found in Methylobacterium sp. (strain 4-46).